The sequence spans 199 residues: Thymidylate kinase (199 aa).

7–14 (GIDGSGKT) contributes to the ATP binding site.

It belongs to the thymidylate kinase family.

The catalysed reaction is dTMP + ATP = dTDP + ADP. In terms of biological role, phosphorylation of dTMP to form dTDP in both de novo and salvage pathways of dTTP synthesis. The polypeptide is Thymidylate kinase (Tropheryma whipplei (strain Twist) (Whipple's bacillus)).